The following is a 563-amino-acid chain: Arginine--tRNA ligase (563 aa).

Residues 121 to 131 (PNIAKPFSIGH) carry the 'HIGH' region motif.

This sequence belongs to the class-I aminoacyl-tRNA synthetase family. In terms of assembly, monomer.

It is found in the cytoplasm. It carries out the reaction tRNA(Arg) + L-arginine + ATP = L-arginyl-tRNA(Arg) + AMP + diphosphate. The chain is Arginine--tRNA ligase from Streptococcus pneumoniae (strain P1031).